Reading from the N-terminus, the 396-residue chain is CCA-adding enzyme (396 aa).

ATP is bound by residues G32 and R35. Residues G32 and R35 each contribute to the CTP site. The Mg(2+) site is built by D45 and D47. Positions 116, 159, 162, 165, and 168 each coordinate ATP. 5 residues coordinate CTP: R116, D159, R162, R165, and R168.

The protein belongs to the tRNA nucleotidyltransferase/poly(A) polymerase family. Bacterial CCA-adding enzyme type 3 subfamily. In terms of assembly, homodimer. Mg(2+) serves as cofactor.

The catalysed reaction is a tRNA precursor + 2 CTP + ATP = a tRNA with a 3' CCA end + 3 diphosphate. The enzyme catalyses a tRNA with a 3' CCA end + 2 CTP + ATP = a tRNA with a 3' CCACCA end + 3 diphosphate. Catalyzes the addition and repair of the essential 3'-terminal CCA sequence in tRNAs without using a nucleic acid template. Adds these three nucleotides in the order of C, C, and A to the tRNA nucleotide-73, using CTP and ATP as substrates and producing inorganic pyrophosphate. tRNA 3'-terminal CCA addition is required both for tRNA processing and repair. Also involved in tRNA surveillance by mediating tandem CCA addition to generate a CCACCA at the 3' terminus of unstable tRNAs. While stable tRNAs receive only 3'-terminal CCA, unstable tRNAs are marked with CCACCA and rapidly degraded. The protein is CCA-adding enzyme of Lactobacillus delbrueckii subsp. bulgaricus (strain ATCC 11842 / DSM 20081 / BCRC 10696 / JCM 1002 / NBRC 13953 / NCIMB 11778 / NCTC 12712 / WDCM 00102 / Lb 14).